We begin with the raw amino-acid sequence, 110 residues long: Large ribosomal subunit protein uL22 (110 aa).

This sequence belongs to the universal ribosomal protein uL22 family. Part of the 50S ribosomal subunit.

Its function is as follows. This protein binds specifically to 23S rRNA; its binding is stimulated by other ribosomal proteins, e.g. L4, L17, and L20. It is important during the early stages of 50S assembly. It makes multiple contacts with different domains of the 23S rRNA in the assembled 50S subunit and ribosome. The globular domain of the protein is located near the polypeptide exit tunnel on the outside of the subunit, while an extended beta-hairpin is found that lines the wall of the exit tunnel in the center of the 70S ribosome. The chain is Large ribosomal subunit protein uL22 from Hydrogenovibrio crunogenus (strain DSM 25203 / XCL-2) (Thiomicrospira crunogena).